A 503-amino-acid chain; its full sequence is Dihydropyrimidinase (503 aa).

Zn(2+) is bound by residues His-66, His-68, and Lys-158. The residue at position 158 (Lys-158) is an N6-carboxylysine. Tyr-163 is a binding site for substrate. Zn(2+) is bound by residues His-191, His-247, and Asp-325. Asn-346 contacts substrate.

It belongs to the metallo-dependent hydrolases superfamily. Hydantoinase/dihydropyrimidinase family. In terms of assembly, homotetramer. Zn(2+) serves as cofactor. In terms of processing, carboxylation allows a single lysine to coordinate two zinc ions.

The enzyme catalyses 5,6-dihydrouracil + H2O = 3-(carbamoylamino)propanoate + H(+). Catalyzes the second step of the reductive pyrimidine degradation, the reversible hydrolytic ring opening of dihydropyrimidines. Can catalyze the ring opening of 5,6-dihydrouracil to N-carbamyl-alanine and of 5,6-dihydrothymine to N-carbamyl-amino isobutyrate. This chain is Dihydropyrimidinase (pyd2), found in Dictyostelium discoideum (Social amoeba).